A 222-amino-acid polypeptide reads, in one-letter code: Probable transaldolase (222 aa).

Lys91 acts as the Schiff-base intermediate with substrate in catalysis.

This sequence belongs to the transaldolase family. Type 3B subfamily.

Its subcellular location is the cytoplasm. The enzyme catalyses D-sedoheptulose 7-phosphate + D-glyceraldehyde 3-phosphate = D-erythrose 4-phosphate + beta-D-fructose 6-phosphate. It functions in the pathway carbohydrate degradation; pentose phosphate pathway; D-glyceraldehyde 3-phosphate and beta-D-fructose 6-phosphate from D-ribose 5-phosphate and D-xylulose 5-phosphate (non-oxidative stage): step 2/3. Its function is as follows. Transaldolase is important for the balance of metabolites in the pentose-phosphate pathway. The chain is Probable transaldolase from Chlorobium chlorochromatii (strain CaD3).